The sequence spans 306 residues: Plant-type L-asparaginase (306 aa).

The Nucleophile role is filled by Thr176. Substrate-binding positions include 203 to 206 (RVGD) and 225 to 228 (TGLG).

This sequence belongs to the Ntn-hydrolase family. In terms of assembly, heterotetramer of two alpha and two beta chains arranged as a dimer of alpha/beta heterodimers. The uncleaved protein forms homodimers. Autocleaved. Generates the alpha and beta subunits. The N-terminal residue of the beta subunit is thought to be responsible for the nucleophile hydrolase activity. Predominantly produced in the uncleaved form when gene expression is induced at 37 degrees Celsius with 0.5 mM IPTG. When produced at 42 degrees Celsius without adding IPTG, approximately 90% of the protein is found in the cleaved form, while the remaining 10% is observed as uncleaved precursor. Undergoes complete auto-cleavage within 24 hours at 37 degrees Celsius.

It carries out the reaction L-asparagine + H2O = L-aspartate + NH4(+). Its activity is regulated as follows. Undergoes auto-cleavage in a temperature-dependent and glycine-independent manner. Metal ions and EDTA do not have any significant effect on enzyme activity, indicating that activity is metal-independent. Functionally, catalyzes the hydrolysis of L-asparagine into L-aspartate and ammonia. Also displays D-asparaginase activity, which is about 10% of the L-asparaginase activity. Does not exhibit glutaminase activity. This chain is Plant-type L-asparaginase, found in Thermococcus kodakarensis (strain ATCC BAA-918 / JCM 12380 / KOD1) (Pyrococcus kodakaraensis (strain KOD1)).